We begin with the raw amino-acid sequence, 352 residues long: N-acetyl-gamma-glutamyl-phosphate reductase (352 aa).

Cys155 is a catalytic residue.

It belongs to the NAGSA dehydrogenase family. Type 1 subfamily.

The protein resides in the cytoplasm. It carries out the reaction N-acetyl-L-glutamate 5-semialdehyde + phosphate + NADP(+) = N-acetyl-L-glutamyl 5-phosphate + NADPH + H(+). The protein operates within amino-acid biosynthesis; L-arginine biosynthesis; N(2)-acetyl-L-ornithine from L-glutamate: step 3/4. Functionally, catalyzes the NADPH-dependent reduction of N-acetyl-5-glutamyl phosphate to yield N-acetyl-L-glutamate 5-semialdehyde. This is N-acetyl-gamma-glutamyl-phosphate reductase from Rippkaea orientalis (strain PCC 8801 / RF-1) (Cyanothece sp. (strain PCC 8801)).